A 220-amino-acid polypeptide reads, in one-letter code: MSFLLHQARFFTTVNHLRDLPPSPQPEVAFAGRSNAGKSTAINILCNQKRLAFASKTPGRTQHINYFSVGPAAEPVANLVDLPGYGYAEVPGAAKAHWEQLLSTYLQTRSQLRGMILMMDSRRPLTELDRRMIEWFAPTGKPIHTLLTKCDKLTRQESVNALRATKKGLDEYRAAGYQGELTAQLFSALKRIGLDEAHELIESWIAPGLAGDPDGPVAAE.

Residues 24 to 207 form the EngB-type G domain; sequence PQPEVAFAGR…HELIESWIAP (184 aa). Residues 32–39, 59–63, 81–84, 148–151, and 185–188 contribute to the GTP site; these read GRSNAGKS, GRTQH, DLPG, TKCD, and LFSA. Ser39 and Thr61 together coordinate Mg(2+).

It belongs to the TRAFAC class TrmE-Era-EngA-EngB-Septin-like GTPase superfamily. EngB GTPase family. It depends on Mg(2+) as a cofactor.

Necessary for normal cell division and for the maintenance of normal septation. This is Probable GTP-binding protein EngB from Paraburkholderia phymatum (strain DSM 17167 / CIP 108236 / LMG 21445 / STM815) (Burkholderia phymatum).